A 118-amino-acid polypeptide reads, in one-letter code: Large ribosomal subunit protein bL20 (118 aa).

It belongs to the bacterial ribosomal protein bL20 family.

Binds directly to 23S ribosomal RNA and is necessary for the in vitro assembly process of the 50S ribosomal subunit. It is not involved in the protein synthesizing functions of that subunit. The protein is Large ribosomal subunit protein bL20 of Desulfovibrio desulfuricans (strain ATCC 27774 / DSM 6949 / MB).